The following is a 149-amino-acid chain: Histone H2B.3, sperm (149 aa).

Residues M1–R57 are disordered. Short sequence motifs (SPKK motif) lie at residues S4 to K7, S9 to K12, S14 to K17, S19 to K22, S24 to R27, and S30 to R33. Residues S9–P20 are compositionally biased toward basic residues. Phosphoserine occurs at positions 19, 24, and 30. Positions A29–R57 are enriched in basic residues. The O-linked (GlcNAc) serine glycan is linked to S136. K144 is covalently cross-linked (Glycyl lysine isopeptide (Lys-Gly) (interchain with G-Cter in ubiquitin)).

This sequence belongs to the histone H2B family. As to quaternary structure, the nucleosome is a histone octamer containing two molecules each of H2A, H2B, H3 and H4 assembled in one H3-H4 heterotetramer and two H2A-H2B heterodimers. The octamer wraps approximately 147 bp of DNA. Monoubiquitination of Lys-144 gives a specific tag for epigenetic transcriptional activation and is also prerequisite for histone H3 'Lys-4' and 'Lys-79' methylation. In terms of processing, phosphorylated on SPKK motifs 4, 5 and 6; which may regulate DNA binding. Dephosphorylated during maturation of spermatids to mature sperm and rephosphorylated at fertilization. Post-translationally, glcNAcylation at Ser-136 promotes monoubiquitination of Lys-144. It fluctuates in response to extracellular glucose, and associates with transcribed genes.

The protein resides in the nucleus. It is found in the chromosome. Functionally, core component of nucleosome. Nucleosomes wrap and compact DNA into chromatin, limiting DNA accessibility to the cellular machineries which require DNA as a template. Histones thereby play a central role in transcription regulation, DNA repair, DNA replication and chromosomal stability. DNA accessibility is regulated via a complex set of post-translational modifications of histones, also called histone code, and nucleosome remodeling. This is Histone H2B.3, sperm from Parechinus angulosus (Angulate sea urchin).